The following is a 274-amino-acid chain: NH(3)-dependent NAD(+) synthetase (274 aa).

Gly46–Ser53 provides a ligand contact to ATP. Asp52 contacts Mg(2+). Deamido-NAD(+) is bound at residue Arg140. Thr160 contributes to the ATP binding site. Glu165 provides a ligand contact to Mg(2+). Lys173 and Asp180 together coordinate deamido-NAD(+). Positions 189 and 211 each coordinate ATP. His260–Lys261 is a binding site for deamido-NAD(+).

It belongs to the NAD synthetase family. As to quaternary structure, homodimer.

The catalysed reaction is deamido-NAD(+) + NH4(+) + ATP = AMP + diphosphate + NAD(+) + H(+). It participates in cofactor biosynthesis; NAD(+) biosynthesis; NAD(+) from deamido-NAD(+) (ammonia route): step 1/1. Catalyzes the ATP-dependent amidation of deamido-NAD to form NAD. Uses ammonia as a nitrogen source. This is NH(3)-dependent NAD(+) synthetase from Streptococcus pyogenes serotype M18 (strain MGAS8232).